A 25-amino-acid polypeptide reads, in one-letter code: Panurgine K (25 aa).

2 cysteine pairs are disulfide-bonded: Cys-8-Cys-23 and Cys-11-Cys-19.

Its subcellular location is the target cell membrane. The protein localises to the secreted. Its function is as follows. Antimicrobial peptide active against Gram-positive bacteria M.luteus (MIC=1.6 uM) and B.subtilis (MIC=3.3 uM). Less active against Gram-negative bacteria E.coli (MIC=63.3 uM) and yeast C.albicans (MIC=24.2 uM). Not active against S.aureus and P.aeruginosa. Has no hemolytic activity against human erythrocytes. Probably acts by disrupting membranes of target cells. The sequence is that of Panurgine K from Panurgus calcaratus (Solitary bee).